We begin with the raw amino-acid sequence, 261 residues long: Proteasome subunit alpha type-4 (261 aa).

Residues S13 and S75 each carry the phosphoserine modification. K127 is subject to N6-acetyllysine. Position 173 is a phosphoserine (S173). Residue K176 is modified to N6-acetyllysine. The disordered stretch occupies residues 240 to 261; that stretch reads HEEEEAKAEREKKEKEQKEKDK.

The protein belongs to the peptidase T1A family. As to quaternary structure, the 26S proteasome consists of a 20S proteasome core and two 19S regulatory subunits. The 20S proteasome core is a barrel-shaped complex made of 28 subunits that are arranged in four stacked rings. The two outer rings are each formed by seven alpha subunits, and the two inner rings are formed by seven beta subunits. The proteolytic activity is exerted by three beta-subunits PSMB5, PSMB6 and PSMB7.

The protein localises to the cytoplasm. Its subcellular location is the nucleus. Its function is as follows. Component of the 20S core proteasome complex involved in the proteolytic degradation of most intracellular proteins. This complex plays numerous essential roles within the cell by associating with different regulatory particles. Associated with two 19S regulatory particles, forms the 26S proteasome and thus participates in the ATP-dependent degradation of ubiquitinated proteins. The 26S proteasome plays a key role in the maintenance of protein homeostasis by removing misfolded or damaged proteins that could impair cellular functions, and by removing proteins whose functions are no longer required. Associated with the PA200 or PA28, the 20S proteasome mediates ubiquitin-independent protein degradation. This type of proteolysis is required in several pathways including spermatogenesis (20S-PA200 complex) or generation of a subset of MHC class I-presented antigenic peptides (20S-PA28 complex). In Macaca fascicularis (Crab-eating macaque), this protein is Proteasome subunit alpha type-4 (PSMA4).